The sequence spans 600 residues: Proline--tRNA ligase (600 aa).

It belongs to the class-II aminoacyl-tRNA synthetase family. ProS type 1 subfamily. As to quaternary structure, homodimer.

It is found in the cytoplasm. It carries out the reaction tRNA(Pro) + L-proline + ATP = L-prolyl-tRNA(Pro) + AMP + diphosphate. In terms of biological role, catalyzes the attachment of proline to tRNA(Pro) in a two-step reaction: proline is first activated by ATP to form Pro-AMP and then transferred to the acceptor end of tRNA(Pro). As ProRS can inadvertently accommodate and process non-cognate amino acids such as alanine and cysteine, to avoid such errors it has two additional distinct editing activities against alanine. One activity is designated as 'pretransfer' editing and involves the tRNA(Pro)-independent hydrolysis of activated Ala-AMP. The other activity is designated 'posttransfer' editing and involves deacylation of mischarged Ala-tRNA(Pro). The misacylated Cys-tRNA(Pro) is not edited by ProRS. The protein is Proline--tRNA ligase of Prochlorococcus marinus subsp. pastoris (strain CCMP1986 / NIES-2087 / MED4).